A 251-amino-acid chain; its full sequence is 3-deoxy-manno-octulosonate cytidylyltransferase (251 aa).

The protein belongs to the KdsB family.

It is found in the cytoplasm. The enzyme catalyses 3-deoxy-alpha-D-manno-oct-2-ulosonate + CTP = CMP-3-deoxy-beta-D-manno-octulosonate + diphosphate. The protein operates within nucleotide-sugar biosynthesis; CMP-3-deoxy-D-manno-octulosonate biosynthesis; CMP-3-deoxy-D-manno-octulosonate from 3-deoxy-D-manno-octulosonate and CTP: step 1/1. It functions in the pathway bacterial outer membrane biogenesis; lipopolysaccharide biosynthesis. Its function is as follows. Activates KDO (a required 8-carbon sugar) for incorporation into bacterial lipopolysaccharide in Gram-negative bacteria. The protein is 3-deoxy-manno-octulosonate cytidylyltransferase of Brucella abortus (strain 2308).